The sequence spans 127 residues: S1-like domain-containing protein C146.08c (127 aa).

In terms of domain architecture, S1-like spans 10–86 (SFDPPARLEK…NKIDGTILYV (77 aa)). Residues 107–127 (ESLNQNDSEESSSSEEEYDSD) are disordered. The segment covering 113-127 (DSEESSSSEEEYDSD) has biased composition (acidic residues). Tyrosine 124 carries the phosphotyrosine modification. The residue at position 126 (serine 126) is a Phosphoserine.

The protein belongs to the EIF1AD family.

It localises to the cytoplasm. It is found in the nucleus. This chain is S1-like domain-containing protein C146.08c, found in Schizosaccharomyces pombe (strain 972 / ATCC 24843) (Fission yeast).